The sequence spans 329 residues: Prostaglandin reductase 1 (329 aa).

Thr-18 is subject to Phosphothreonine. At Ser-20 the chain carries Phosphoserine. Residues 152–155, Lys-178, Tyr-193, Asn-217, 239–245, 270–272, and Asn-321 contribute to the NADP(+) site; these read GAVG, CGAISQY, and FIV. Lys-178 is modified (N6-(2-hydroxyisobutyryl)lysine; alternate). N6-acetyllysine; alternate is present on Lys-178.

It belongs to the NADP-dependent oxidoreductase L4BD family. In terms of assembly, monomer or homodimer.

The protein localises to the cytoplasm. It carries out the reaction 13,14-dihydro-15-oxo-prostaglandin E1 + NADP(+) = 15-oxoprostaglandin E1 + NADPH + H(+). It catalyses the reaction 13,14-dihydro-15-oxo-prostaglandin E2 + NADP(+) = 15-oxoprostaglandin E2 + NADPH + H(+). The enzyme catalyses 13,14-dihydro-15-oxo-prostaglandin F1alpha + NADP(+) = 15-oxoprostaglandin F1alpha + NADPH + H(+). The catalysed reaction is 13,14-dihydro-15-oxo-PGF2alpha + NADP(+) = 15-oxoprostaglandin F2alpha + NADPH + H(+). It carries out the reaction leukotriene B4 + NADP(+) = 12-oxo-leukotriene B4 + NADPH + H(+). It catalyses the reaction 20-hydroxy-leukotriene B4 + NADP(+) = 12-oxo-20-hydroxy-leukotriene B4 + NADPH + H(+). The enzyme catalyses 6-trans-leukotriene B4 + NADP(+) = 12-oxo-(5S)-hydroxy-(6E,8E,10E,14Z)-eicosatetraenoate + NADPH + H(+). The catalysed reaction is (5S,12S)-dihydroxy-(6E,10E,12E,14Z)-eicosatetraenoate + NADP(+) = 12-oxo-(5S)-hydroxy-(6E,8E,10E,14Z)-eicosatetraenoate + NADPH + H(+). It carries out the reaction an n-alkanal + NADP(+) = an alk-2-enal + NADPH + H(+). It catalyses the reaction hexanal + NADP(+) = (E)-hex-2-enal + NADPH + H(+). The enzyme catalyses octanal + NADP(+) = (2E)-octenal + NADPH + H(+). The catalysed reaction is decanal + NADP(+) = (2E)-decenal + NADPH + H(+). It carries out the reaction dodecanal + NADP(+) = (2E)-dodecenal + NADPH + H(+). It catalyses the reaction 4-hydroxynonanal + NADP(+) = (E)-4-hydroxynon-2-enal + NADPH + H(+). The enzyme catalyses pentan-2-one + NADP(+) = (E)-pent-3-en-2-one + NADPH + H(+). The catalysed reaction is nonan-2-one + NADP(+) = (3E)-nonen-2-one + NADPH + H(+). NAD(P)H-dependent oxidoreductase involved in metabolic inactivation of pro- and anti-inflammatory eicosanoids: prostaglandins (PG), leukotrienes (LT) and lipoxins (LX). Catalyzes with high efficiency the reduction of the 13,14 double bond of 15-oxoPGs, including 15-oxo-PGE1, 15-oxo-PGE2, 15-oxo-PGF1-alpha and 15-oxo-PGF2-alpha. Catalyzes with lower efficiency the oxidation of the hydroxyl group at C12 of LTB4 and its derivatives, converting them into biologically less active 12-oxo-LTB4 metabolites. Reduces 15-oxo-LXA4 to 13,14 dihydro-15-oxo-LXA4, enhancing neutrophil recruitment at the inflammatory site. Plays a role in metabolic detoxification of alkenals and ketones. Reduces alpha,beta-unsaturated alkenals and ketones, particularly those with medium-chain length, showing highest affinity toward (2E)-decenal and (3E)-3-nonen-2-one. Inactivates 4-hydroxy-2-nonenal, a cytotoxic lipid constituent of oxidized low-density lipoprotein particles. The protein is Prostaglandin reductase 1 (Ptgr1) of Rattus norvegicus (Rat).